Reading from the N-terminus, the 154-residue chain is Superoxide dismutase [Cu-Zn] (154 aa).

Cu cation-binding residues include His-47, His-49, and His-64. Cys-58 and Cys-147 are joined by a disulfide. Residues His-64, His-72, His-81, and Asp-84 each contribute to the Zn(2+) site. His-121 contacts Cu cation. Arg-144 provides a ligand contact to substrate.

Belongs to the Cu-Zn superoxide dismutase family. As to quaternary structure, homodimer. Cu cation serves as cofactor. Requires Zn(2+) as cofactor.

The protein localises to the cytoplasm. It carries out the reaction 2 superoxide + 2 H(+) = H2O2 + O2. Functionally, destroys radicals which are normally produced within the cells and which are toxic to biological systems. This chain is Superoxide dismutase [Cu-Zn] (SOD1), found in Candida albicans (Yeast).